A 440-amino-acid polypeptide reads, in one-letter code: Glycerol-3-phosphate dehydrogenase [NAD(+)], chloroplastic (440 aa).

The N-terminal 47 residues, 1-47 (MAAAAAATFLPHTPTPRRRLAVAVHSPTRRRLSLVFSGPPDGALSVA), are a transit peptide targeting the chloroplast. The disordered stretch occupies residues 57-76 (EEAAAAVSAPRGGGGGGGKE). Residues 114–119 (GGGSFG), phenylalanine 191, lysine 214, and alanine 248 each bind NAD(+). Lysine 214 serves as a coordination point for substrate. Lysine 299 acts as the Proton acceptor in catalysis. Positions 363 and 389 each coordinate NAD(+). 363–364 (RN) contacts substrate.

Belongs to the NAD-dependent glycerol-3-phosphate dehydrogenase family.

Its subcellular location is the plastid. The protein resides in the chloroplast. It catalyses the reaction sn-glycerol 3-phosphate + NAD(+) = dihydroxyacetone phosphate + NADH + H(+). The protein operates within membrane lipid metabolism; glycerophospholipid metabolism. In terms of biological role, required to supply glycerol-3-phosphate in the chloroplast for the synthesis of glycerolipids. The sequence is that of Glycerol-3-phosphate dehydrogenase [NAD(+)], chloroplastic from Oryza sativa subsp. japonica (Rice).